The following is a 158-amino-acid chain: NAD(P)H-quinone oxidoreductase subunit J, chloroplastic (158 aa).

The protein belongs to the complex I 30 kDa subunit family. NDH is composed of at least 16 different subunits, 5 of which are encoded in the nucleus.

Its subcellular location is the plastid. The protein resides in the chloroplast thylakoid membrane. The enzyme catalyses a plastoquinone + NADH + (n+1) H(+)(in) = a plastoquinol + NAD(+) + n H(+)(out). The catalysed reaction is a plastoquinone + NADPH + (n+1) H(+)(in) = a plastoquinol + NADP(+) + n H(+)(out). In terms of biological role, NDH shuttles electrons from NAD(P)H:plastoquinone, via FMN and iron-sulfur (Fe-S) centers, to quinones in the photosynthetic chain and possibly in a chloroplast respiratory chain. The immediate electron acceptor for the enzyme in this species is believed to be plastoquinone. Couples the redox reaction to proton translocation, and thus conserves the redox energy in a proton gradient. This is NAD(P)H-quinone oxidoreductase subunit J, chloroplastic from Olimarabidopsis pumila (Dwarf rocket).